Reading from the N-terminus, the 496-residue chain is Hexokinase-2 (496 aa).

Residues 4–24 (ATVGAVVVGTAAAVAVAALIM) form a helical membrane-spanning segment. One can recognise a Hexokinase domain in the interval 35-487 (ARARAILKEF…SGIGAALLAA (453 aa)). The interval 90–228 (TGDEGGVFYA…EIDMRVSALV (139 aa)) is hexokinase small subdomain. ADP contacts are provided by Gly104, Thr105, and Asn106. Residues Thr194, Lys195, Asn229, and Asp230 each coordinate D-glucose. The segment at 229 to 476 (NDTVGTLAGG…TSIVFKHAND (248 aa)) is hexokinase large subdomain. Thr253 is a binding site for ADP. D-glucose contacts are provided by Asn256, Glu284, and Glu315. Gly441 is an ADP binding site.

This sequence belongs to the hexokinase family.

It is found in the plastid. Its subcellular location is the chloroplast outer membrane. The catalysed reaction is a D-hexose + ATP = a D-hexose 6-phosphate + ADP + H(+). It carries out the reaction D-fructose + ATP = D-fructose 6-phosphate + ADP + H(+). It catalyses the reaction D-glucose + ATP = D-glucose 6-phosphate + ADP + H(+). The protein operates within carbohydrate metabolism; hexose metabolism. It participates in carbohydrate degradation; glycolysis; D-glyceraldehyde 3-phosphate and glycerone phosphate from D-glucose: step 1/4. In terms of biological role, fructose and glucose phosphorylating enzyme. May be involved in the phosphorylation of glucose during the export from plastids to cytosol. Seems neither to be involved in cell sugar sensing nor in carbohydrate metabolism in tuber. The chain is Hexokinase-2 (HXK2) from Solanum tuberosum (Potato).